The sequence spans 701 residues: Translation factor GUF1, mitochondrial (701 aa).

The N-terminal 29 residues, 1-29 (MSCCKGLTPQCVRVRLPRRPALSHPARLY), are a transit peptide targeting the mitochondrion. Over residues 23 to 50 (SHPARLYSSSSSSNSHSSPSRPRLLSRP) the composition is skewed to low complexity. The interval 23-85 (SHPARLYSSS…RSSHHSSAPM (63 aa)) is disordered. Positions 98-283 (ERYRNFCVIA…AVIEQIPHPT (186 aa)) constitute a tr-type G domain. GTP-binding positions include 107–114 (AHVDHGKS), 172–176 (DTPGH), and 226–229 (NKID).

It belongs to the TRAFAC class translation factor GTPase superfamily. Classic translation factor GTPase family. LepA subfamily.

The protein localises to the mitochondrion inner membrane. It carries out the reaction GTP + H2O = GDP + phosphate + H(+). Its function is as follows. Promotes mitochondrial protein synthesis. May act as a fidelity factor of the translation reaction, by catalyzing a one-codon backward translocation of tRNAs on improperly translocated ribosomes. Binds to mitochondrial ribosomes in a GTP-dependent manner. The sequence is that of Translation factor GUF1, mitochondrial from Pyricularia oryzae (strain 70-15 / ATCC MYA-4617 / FGSC 8958) (Rice blast fungus).